Reading from the N-terminus, the 170-residue chain is Cathelicidin antimicrobial peptide (170 aa).

The signal sequence occupies residues 1–30 (MKTQRHGPSLGRWSLVLLLLGLVMPLAIVA). Residues 31–131 (QVLSYQEAVL…DISCDKDNRR (101 aa)) constitute a propeptide, cathelin-like domain (CLD). Intrachain disulfides connect Cys86–Cys97 and Cys108–Cys125. Residues 150–162 (LKKIGQKIKDFLG) are active core.

It belongs to the cathelicidin family. Monomer, homodimer or homotrimer (in vitro). Oligomerizes as tetra- or hexamer in solution (in vitro). In terms of processing, proteolytically cleaved by proteinase PRTN3 into antibacterial peptide LL-37. Proteolytically cleaved by cathepsin CTSG and neutrophil elastase ELANE. Resistant to proteolytic degradation in solution, and when bound to both zwitterionic (mimicking mammalian membranes) and negatively charged membranes (mimicking bacterial membranes). Post-translationally, after secretion onto the skin surface, the CAMP gene product is processed by a serine protease-dependent mechanism into multiple novel antimicrobial peptides distinct from and shorter than cathelicidin LL-37. These peptides show enhanced antimicrobial action, acquiring the ability to kill skin pathogens such as S.aureus, E.coli and C.albicans. These peptides have lost the ability to stimulate CXCL8/IL8 release from keratinocytes. The peptides act synergistically, killing bacteria at lower concentrations when present together, and maintain activity at increased salt condition.

The protein localises to the secreted. The protein resides in the vesicle. Functionally, antimicrobial protein that is an integral component of the innate immune system. Binds to bacterial lipopolysaccharides (LPS). Acts via neutrophil N-formyl peptide receptors to enhance the release of CXCL2. Postsecretory processing generates multiple cathelicidin antimicrobial peptides with various lengths which act as a topical antimicrobial defense in sweat on skin. The unprocessed precursor form, cathelicidin antimicrobial peptide, inhibits the growth of Gram-negative E.coli and E.aerogenes with efficiencies comparable to that of the mature peptide LL-37 (in vitro). In terms of biological role, antimicrobial peptide that is an integral component of the innate immune system. Binds to bacterial lipopolysaccharides (LPS). Causes membrane permeabilization by forming transmembrane pores (in vitro). Causes lysis of E.coli. Exhibits antimicrobial activity against Gram-negative bacteria such as P.aeruginosa, S.typhimurium, E.aerogenes, E.coli and P.syringae, Gram-positive bacteria such as L.monocytogenes, S.epidermidis, S.pyogenes and S.aureus, as well as vancomycin-resistant enterococci (in vitro). Exhibits antimicrobial activity against methicillin-resistant S.aureus, P.mirabilis, and C.albicans in low-salt media, but not in media containing 100 mM NaCl (in vitro). Forms chiral supramolecular assemblies with quinolone signal (PQS) molecules of P.aeruginosa, which may lead to interference of bacterial quorum signaling and perturbance of bacterial biofilm formation. May form supramolecular fiber-like assemblies on bacterial membranes. Induces cytokine and chemokine producation as well as TNF/TNFA and CSF2/GMCSF production in normal human keratinocytes. Exhibits hemolytic activity against red blood cells. Its function is as follows. Exhibits antimicrobial activity against E.coli and B.megaterium (in vitro). The chain is Cathelicidin antimicrobial peptide from Trachypithecus obscurus (Dusky leaf-monkey).